Consider the following 360-residue polypeptide: DNA integrity scanning protein DisA (360 aa).

Residues 11–149 (ELDLSSILQF…ENMKYTLKDI (139 aa)) enclose the DAC domain. Residues glycine 78, leucine 96, and 109-113 (MRHRT) contribute to the ATP site.

Belongs to the DisA family. Homooligomer. Interacts with RadA. Requires Mg(2+) as cofactor.

The protein localises to the cytoplasm. It carries out the reaction 2 ATP = 3',3'-c-di-AMP + 2 diphosphate. With respect to regulation, diadenylate cyclase (DAC) activity is inhibited 2-fold by Holliday junction (HJ) DNA, further addition of RecG inhibits DAC activity 11-fold; RecG may relocate DisA from the HJ. DAC is inhibited by the interaction with RadA. Diadenylate cyclase activity is not affected by ssDNA or dsDNA, but three- and four-way junctions strongly inhibit the activity of DisA, suggesting the enzyme is regulated by branched nucleic acids. Functionally, participates in a DNA-damage check-point that is active prior to asymmetric division when DNA is damaged. Forms globular foci that rapidly scan along the chromosomes during sporulation, searching for lesions. Its ability to scan through the chromosome rapidly is due to its non-specific DNA-binding. When a lesion is present, DisA pauses at the lesion site. This triggers a cellular response that culminates in a temporary block in sporulation initiation. It is required, at least partially, to inhibit the activity of the transcription factor spo0A, which controls, among others, early sporulation genes. In B.subtilis c-di-AMP is a second messenger that mediates growth, DNA repair and cell wall homeostasis; it is toxic when present in excess. Limits the replication fork reggression activity of RecG; DisA inhibits the ATPase activity of RecG. By limiting RecG-mediated fork regression, DisA provides time for removal of potentially lethal DNA lesions. One of 3 paralogous diadenylate cyclases (DAC) in this bacteria. Has diadenylate cyclase activity, catalyzing the condensation of 2 ATP molecules into cyclic di-AMP (c-di-AMP). c-di-AMP acts as a signaling molecule that couples DNA integrity with progression of sporulation. The rise in c-di-AMP level generated by DisA while scanning the chromosome operates as a positive signal that advances sporulation; upon encountering a lesion, the DisA focus arrests at the damaged site and halts c-di-AMP synthesis. Does not convert GTP to c-di-GMP. The protein is DNA integrity scanning protein DisA of Bacillus subtilis (strain 168).